Here is a 765-residue protein sequence, read N- to C-terminus: Eukaryotic translation initiation factor 3 subunit B (765 aa).

Positions 1 to 136 (MKNFLPRTLK…LFVECGSMND (136 aa)) are sufficient for interaction with HCR1 and TIF32. The interval 28-261 (RNTQLKRSKI…GVTAWGGPNF (234 aa)) is sufficient for interaction with PIC8. Ser-61 carries the post-translational modification Phosphoserine. Tyr-67 bears the Phosphotyrosine mark. An RRM domain is found at 77 to 162 (QYIVVNGAPV…HRLFLYTMKD (86 aa)). Ser-671 is modified (phosphoserine).

The protein belongs to the eIF-3 subunit B family. As to quaternary structure, component of the eukaryotic translation initiation factor 3 (eIF-3) complex.

Its subcellular location is the cytoplasm. RNA-binding component of the eukaryotic translation initiation factor 3 (eIF-3) complex, which is involved in protein synthesis of a specialized repertoire of mRNAs and, together with other initiation factors, stimulates binding of mRNA and methionyl-tRNAi to the 40S ribosome. The eIF-3 complex specifically targets and initiates translation of a subset of mRNAs involved in cell proliferation. This Saccharomyces cerevisiae (strain YJM789) (Baker's yeast) protein is Eukaryotic translation initiation factor 3 subunit B.